The chain runs to 315 residues: MSGERAKRFPLALEDLKRAPRKSEVRSGSGERHAASAVPKAADKPAAVLKPVAKTGAARALPGTTAAKPATAPKPNLLKPAMPQPAAPKLAAPSIAPAGAFALTSERVRERMVERLRANGVTDARVLDAMAAVPRHMFVDPGLATQAYEDAALPIGHQQTISKPSVVARMIELAMAGRTLERVLEIGTGCGYQAAVLSHVARDVYSIERIKPLYERAKLNLRPLRVPNIRLHYGDGRVGLPSAAPFDAIVIAAAGLDVPQALLEQLAIGGRLVAPVGAQSGQHQVLTLVERVAPAQWRESRLDRVFFVPLKSGVI.

Disordered stretches follow at residues 1-47 and 59-89; these read MSGE…KPAA and RALP…AAPK. Basic and acidic residues predominate over residues 14–34; that stretch reads EDLKRAPRKSEVRSGSGERHA. 2 stretches are compositionally biased toward low complexity: residues 35–47 and 59–81; these read ASAV…KPAA and RALP…LKPA. Ser162 is an active-site residue.

It belongs to the methyltransferase superfamily. L-isoaspartyl/D-aspartyl protein methyltransferase family.

It localises to the cytoplasm. It carries out the reaction [protein]-L-isoaspartate + S-adenosyl-L-methionine = [protein]-L-isoaspartate alpha-methyl ester + S-adenosyl-L-homocysteine. Catalyzes the methyl esterification of L-isoaspartyl residues in peptides and proteins that result from spontaneous decomposition of normal L-aspartyl and L-asparaginyl residues. It plays a role in the repair and/or degradation of damaged proteins. The protein is Protein-L-isoaspartate O-methyltransferase of Burkholderia ambifaria (strain MC40-6).